Reading from the N-terminus, the 520-residue chain is Ribonuclease Y (520 aa).

A helical membrane pass occupies residues 4-24 (TMFTIISILLSLICLVVGYFV). Residues 210–273 (TVSVVNLPND…ETARIALDKL (64 aa)) enclose the KH domain. In terms of domain architecture, HD spans 336-429 (VLKHSIEVAH…VAAADALSAA (94 aa)).

Belongs to the RNase Y family.

It is found in the cell membrane. Functionally, endoribonuclease that initiates mRNA decay. The protein is Ribonuclease Y of Bacillus pumilus (strain SAFR-032).